Consider the following 664-residue polypeptide: DNA ligase (664 aa).

Residues 32 to 36 (DKEYD) and 80 to 81 (SL) contribute to the NAD(+) site. Residue K122 is the N6-AMP-lysine intermediate of the active site. The NAD(+) site is built by R144, E178, and K314. Residues C407, C410, C423, and C429 each coordinate Zn(2+). A BRCT domain is found at 587-664 (IDENPFMGKT…NEEEFSNKIK (78 aa)).

This sequence belongs to the NAD-dependent DNA ligase family. LigA subfamily. Mg(2+) is required as a cofactor. It depends on Mn(2+) as a cofactor.

The catalysed reaction is NAD(+) + (deoxyribonucleotide)n-3'-hydroxyl + 5'-phospho-(deoxyribonucleotide)m = (deoxyribonucleotide)n+m + AMP + beta-nicotinamide D-nucleotide.. Functionally, DNA ligase that catalyzes the formation of phosphodiester linkages between 5'-phosphoryl and 3'-hydroxyl groups in double-stranded DNA using NAD as a coenzyme and as the energy source for the reaction. It is essential for DNA replication and repair of damaged DNA. In Clostridium botulinum (strain 657 / Type Ba4), this protein is DNA ligase.